Here is a 236-residue protein sequence, read N- to C-terminus: Large ribosomal subunit protein uL1 (236 aa).

This sequence belongs to the universal ribosomal protein uL1 family. As to quaternary structure, part of the 50S ribosomal subunit.

Functionally, binds directly to 23S rRNA. The L1 stalk is quite mobile in the ribosome, and is involved in E site tRNA release. Its function is as follows. Protein L1 is also a translational repressor protein, it controls the translation of the L11 operon by binding to its mRNA. The polypeptide is Large ribosomal subunit protein uL1 (Corynebacterium glutamicum (strain R)).